Here is a 941-residue protein sequence, read N- to C-terminus: Isoleucine--tRNA ligase (941 aa).

A 'HIGH' region motif is present at residues 58 to 68 (PYANGDIHIGH). Glutamate 563 lines the L-isoleucyl-5'-AMP pocket. Positions 604–608 (KMSKS) match the 'KMSKS' region motif. Lysine 607 lines the ATP pocket. Zn(2+) contacts are provided by cysteine 904, cysteine 907, cysteine 924, and cysteine 927.

Belongs to the class-I aminoacyl-tRNA synthetase family. IleS type 1 subfamily. Monomer. Requires Zn(2+) as cofactor.

It is found in the cytoplasm. The catalysed reaction is tRNA(Ile) + L-isoleucine + ATP = L-isoleucyl-tRNA(Ile) + AMP + diphosphate. Its function is as follows. Catalyzes the attachment of isoleucine to tRNA(Ile). As IleRS can inadvertently accommodate and process structurally similar amino acids such as valine, to avoid such errors it has two additional distinct tRNA(Ile)-dependent editing activities. One activity is designated as 'pretransfer' editing and involves the hydrolysis of activated Val-AMP. The other activity is designated 'posttransfer' editing and involves deacylation of mischarged Val-tRNA(Ile). This is Isoleucine--tRNA ligase from Halorhodospira halophila (strain DSM 244 / SL1) (Ectothiorhodospira halophila (strain DSM 244 / SL1)).